Consider the following 442-residue polypeptide: Transcription factor MYCFIDRAFT_198930 (442 aa).

The interval 1 to 34 is disordered; sequence MSTTPMAAPPGADLKPVTSSRGRSSTSDEQKLRS. Residues 36 to 63 constitute a DNA-binding region (zn(2)-C6 fungal-type); sequence CESCAQSKLKCSGDKPACARCAKRGLAC. Positions 74–107 are disordered; the sequence is KPKGYTSTNDNNPSKRREDSHSPAASQWSSTGHL. Residues 96–107 show a composition bias toward polar residues; sequence PAASQWSSTGHL.

The protein localises to the nucleus. Its function is as follows. Transcription factor that positively regulates the expression of the gene cluster that mediates the biosynthesis of an emodin derivative that may be involved in black Sigatoka disease of banana. The sequence is that of Transcription factor MYCFIDRAFT_198930 from Pseudocercospora fijiensis (strain CIRAD86) (Black leaf streak disease fungus).